The primary structure comprises 141 residues: Large ribosomal subunit protein uL16m (141 aa).

This sequence belongs to the universal ribosomal protein uL16 family.

The protein localises to the mitochondrion. The protein is Large ribosomal subunit protein uL16m (RPL16) of Acanthamoeba castellanii (Amoeba).